The sequence spans 313 residues: Porphobilinogen deaminase (313 aa).

The residue at position 242 (Cys-242) is an S-(dipyrrolylmethanemethyl)cysteine.

This sequence belongs to the HMBS family. In terms of assembly, monomer. The cofactor is dipyrromethane.

The enzyme catalyses 4 porphobilinogen + H2O = hydroxymethylbilane + 4 NH4(+). Its pathway is porphyrin-containing compound metabolism; protoporphyrin-IX biosynthesis; coproporphyrinogen-III from 5-aminolevulinate: step 2/4. Tetrapolymerization of the monopyrrole PBG into the hydroxymethylbilane pre-uroporphyrinogen in several discrete steps. The polypeptide is Porphobilinogen deaminase (Pseudomonas putida (strain W619)).